The primary structure comprises 325 residues: Peroxidase 45 (325 aa).

Positions 1 to 25 (MEKNTSQTIFSNFFLLLLLSSCVSA) are cleaved as a signal peptide. Cystine bridges form between Cys36/Cys115, Cys69/Cys74, Cys121/Cys321, and Cys200/Cys232. The Proton acceptor role is filled by His67. Ca(2+)-binding residues include Asp68, Val71, Gly73, Asp75, and Ser77. Pro163 is a binding site for substrate. His193 contacts heme b. Thr194 serves as a coordination point for Ca(2+). The Ca(2+) site is built by Asp245, Ser248, and Asp253.

It belongs to the peroxidase family. Classical plant (class III) peroxidase subfamily. The cofactor is heme b. It depends on Ca(2+) as a cofactor. In terms of tissue distribution, slightly expressed in roots.

The protein localises to the secreted. The catalysed reaction is 2 a phenolic donor + H2O2 = 2 a phenolic radical donor + 2 H2O. Functionally, removal of H(2)O(2), oxidation of toxic reductants, biosynthesis and degradation of lignin, suberization, auxin catabolism, response to environmental stresses such as wounding, pathogen attack and oxidative stress. These functions might be dependent on each isozyme/isoform in each plant tissue. The polypeptide is Peroxidase 45 (PER45) (Arabidopsis thaliana (Mouse-ear cress)).